Here is a 377-residue protein sequence, read N- to C-terminus: Apelin receptor (377 aa).

Residues methionine 1 to leucine 28 lie on the Extracellular side of the membrane. N-linked (GlcNAc...) asparagine glycosylation is present at asparagine 13. Disulfide bonds link cysteine 17–cysteine 279 and cysteine 100–cysteine 179. The helical transmembrane segment at isoleucine 29 to phenylalanine 52 threads the bilayer. Over tryptophan 53–alanine 62 the chain is Cytoplasmic. Residues aspartate 63–alanine 84 traverse the membrane as a helical segment. Over threonine 85–threonine 97 the chain is Extracellular. Residues phenylalanine 98 to phenylalanine 123 traverse the membrane as a helical segment. Residues aspartate 124–glycine 144 are Cytoplasmic-facing. A helical membrane pass occupies residues alanine 145 to valine 162. The Extracellular segment spans residues methionine 163–glutamate 196. N-linked (GlcNAc...) asparagine glycosylation occurs at asparagine 173. Residues valine 197–phenylalanine 221 form a helical membrane-spanning segment. At isoleucine 222–leucine 244 the chain is on the cytoplasmic side. Residues leucine 245 to leucine 268 form a helical membrane-spanning segment. The Extracellular portion of the chain corresponds to tyrosine 269 to asparagine 287. The chain crosses the membrane as a helical span at residues valine 288–phenylalanine 310. Over aspartate 311–aspartate 377 the chain is Cytoplasmic. Positions serine 335–serine 349 are enriched in low complexity. The segment at serine 335–aspartate 377 is disordered.

It belongs to the G-protein coupled receptor 1 family. As to quaternary structure, homodimer; dimerization inhibits APLNR-mediated G protein and beta-arrestin signaling pathways compared to monomeric APLNR. In terms of tissue distribution, widely expressed. Highest expression in the lung, lower in the heart, placenta, ovary, skeletal muscle, mammary gland, kidney and several structures in the brain as the hypothalamus (supraoptic and periventricular nuclei), pituitary, olfactory bulb and pineal gland.

Its subcellular location is the cell membrane. Its function is as follows. G protein-coupled receptor for peptide hormones apelin (APLN) and apelin receptor early endogenous ligand (APELA/ELA), that plays a role in the regulation of normal cardiovascular function and fluid homeostasis. When acting as apelin receptor, activates both G(i) protein pathway that inhibits adenylate cyclase activity, and the beta-arrestin pathway that promotes internalization of the receptor. APLNR/APJ also functions as mechanoreceptor that is activated by pathological stimuli in a G-protein-independent fashion to induce beta-arrestin signaling, hence eliciting cardiac hypertrophy. However, the presence of apelin ligand blunts cardiac hypertrophic induction from APLNR/APJ on response to pathological stimuli. Plays a key role in early development such as gastrulation, blood vessels formation and heart morphogenesis by acting as a APELA receptor. May promote angioblast migration toward the embryonic midline, i.e. the position of the future vessel formation, during vasculogenesis. Promotes sinus venosus (SV)-derived endothelial cells migration into the developing heart to promote coronary blood vessel development. Also plays a role in various processes in adults such as regulation of blood vessel formation, blood pressure, heart contractility and heart failure. This Rattus norvegicus (Rat) protein is Apelin receptor.